The following is a 608-amino-acid chain: 1-deoxy-D-xylulose-5-phosphate synthase (608 aa).

Residues H80 and 121-123 (GHS) each bind thiamine diphosphate. Residue D152 coordinates Mg(2+). Thiamine diphosphate is bound by residues 153-154 (GA), N181, Y282, and E357. Position 181 (N181) interacts with Mg(2+).

This sequence belongs to the transketolase family. DXPS subfamily. In terms of assembly, homodimer. The cofactor is Mg(2+). It depends on thiamine diphosphate as a cofactor.

It carries out the reaction D-glyceraldehyde 3-phosphate + pyruvate + H(+) = 1-deoxy-D-xylulose 5-phosphate + CO2. It functions in the pathway metabolic intermediate biosynthesis; 1-deoxy-D-xylulose 5-phosphate biosynthesis; 1-deoxy-D-xylulose 5-phosphate from D-glyceraldehyde 3-phosphate and pyruvate: step 1/1. Catalyzes the acyloin condensation reaction between C atoms 2 and 3 of pyruvate and glyceraldehyde 3-phosphate to yield 1-deoxy-D-xylulose-5-phosphate (DXP). This Buchnera aphidicola subsp. Acyrthosiphon pisum (strain 5A) protein is 1-deoxy-D-xylulose-5-phosphate synthase.